The sequence spans 70 residues: Large ribosomal subunit protein bL32c (70 aa).

Disordered stretches follow at residues 1-20 (MAVP…KNVR) and 51-70 (NDDS…LDDP). The span at 52-61 (DDSSGSSESK) shows a compositional bias: polar residues.

Belongs to the bacterial ribosomal protein bL32 family.

It localises to the plastid. Its subcellular location is the chloroplast. This chain is Large ribosomal subunit protein bL32c (rpl32), found in Pinus thunbergii (Japanese black pine).